Consider the following 196-residue polypeptide: Probable nicotinate-nucleotide adenylyltransferase (196 aa).

This sequence belongs to the NadD family.

The enzyme catalyses nicotinate beta-D-ribonucleotide + ATP + H(+) = deamido-NAD(+) + diphosphate. It participates in cofactor biosynthesis; NAD(+) biosynthesis; deamido-NAD(+) from nicotinate D-ribonucleotide: step 1/1. Its function is as follows. Catalyzes the reversible adenylation of nicotinate mononucleotide (NaMN) to nicotinic acid adenine dinucleotide (NaAD). The protein is Probable nicotinate-nucleotide adenylyltransferase of Caldicellulosiruptor bescii (strain ATCC BAA-1888 / DSM 6725 / KCTC 15123 / Z-1320) (Anaerocellum thermophilum).